Here is a 197-residue protein sequence, read N- to C-terminus: Imidazoleglycerol-phosphate dehydratase (197 aa).

Belongs to the imidazoleglycerol-phosphate dehydratase family.

It is found in the cytoplasm. It carries out the reaction D-erythro-1-(imidazol-4-yl)glycerol 3-phosphate = 3-(imidazol-4-yl)-2-oxopropyl phosphate + H2O. Its pathway is amino-acid biosynthesis; L-histidine biosynthesis; L-histidine from 5-phospho-alpha-D-ribose 1-diphosphate: step 6/9. This Pseudomonas entomophila (strain L48) protein is Imidazoleglycerol-phosphate dehydratase.